The primary structure comprises 1052 residues: Protein HelA (1052 aa).

Helical transmembrane passes span 14-34, 121-141, 348-368, 369-389, 393-413, 450-470, 483-503, 537-557, 878-898, 903-923, 934-954, 979-999, and 1011-1031; these read WFVLLFTLVIAILGVYNFQRL, LPPGVETTLGPISTGLGEIFM, GALLVCVILFLFLGNIRAALI, TAMVIPLSMLLTITGMVENQI, LMSLGALDFGLIVDGAVIIVE, SIFGVFIITVVYLPILTLTGV, IIALLASMLFALTFVPAAVAI, VVISAAVALVVVSLGIAFHLG, LQIVVPITLLGIFLLLFISFG, ALLVFTGIPLALTGGVFALWL, VGFIALSGVAVLNGLVMITFI, PVLMTALVASLGFVPMALATG, and VVIGGIISSTFLTLLVLPGLY.

Belongs to the resistance-nodulation-cell division (RND) (TC 2.A.6) family.

It is found in the cell inner membrane. Presumed to function with HelC and HelB in efflux of an unidentified substrate. The protein is Protein HelA (helA) of Legionella pneumophila.